A 428-amino-acid polypeptide reads, in one-letter code: G2/mitotic-specific cyclin-B (428 aa).

Belongs to the cyclin family. Cyclin AB subfamily. In terms of assembly, interacts with the CDC2 protein kinase to form a serine/threonine kinase holoenzyme complex also known as maturation promoting factor (MPF). The cyclin subunit imparts substrate specificity to the complex.

Essential for the control of the cell cycle at the G2/M (mitosis) transition. The polypeptide is G2/mitotic-specific cyclin-B (Spisula solidissima (Atlantic surf-clam)).